A 205-amino-acid chain; its full sequence is 3-isopropylmalate dehydratase small subunit (205 aa).

It belongs to the LeuD family. LeuD type 1 subfamily. Heterodimer of LeuC and LeuD.

It catalyses the reaction (2R,3S)-3-isopropylmalate = (2S)-2-isopropylmalate. It participates in amino-acid biosynthesis; L-leucine biosynthesis; L-leucine from 3-methyl-2-oxobutanoate: step 2/4. Functionally, catalyzes the isomerization between 2-isopropylmalate and 3-isopropylmalate, via the formation of 2-isopropylmaleate. In Christiangramia forsetii (strain DSM 17595 / CGMCC 1.15422 / KT0803) (Gramella forsetii), this protein is 3-isopropylmalate dehydratase small subunit.